Here is a 555-residue protein sequence, read N- to C-terminus: MSIPGFGGTNGSLASDSSEFTQISIPPANEWRIEVPFKKLLKLKVTLGTLEINGSELPNNVELQLSGVKLPIYAPPSINKEHAKVEYKLVTNPDQSVLLSSEDEEFTQYLSDETNMDLVVNLAMYIESKRQIAKDLKTNEGDHALGPRVLILGGKYLGKTSLAKTLVSYAVKMGSSPVLVNLDPKHGVFALPGSLSATVINDSLDIECANGYGFTMTTTGSLSKSMKQPVVKNFGFSDVDENVKLYTRQIDQLGIAVLSKLEGIEDGSGSEVDGNHNKVRSSGVIVDTPPFTMKSFDIISSIVSDLKIDLIVVLGNEKMKIDLTKKLKHKIEQGSLNIIKLSKSPGVVDDVNDRFIRMTQEQTIREYFNGNHRIRLSPFKTEIDLPSSSSSASASASVSSSSSTSSSGLVIYKSVLTKEYESSMAFLPSGDDFEHITNEDENGGDGNDGDGRGIVEDIKEYYQILEDPNSSNLDNSIVAITHLPLESGSSSVTNGASGSLNMSSKRKRELLNTSVMGYIHVSKVDDEKKKMKILLPFPGVFPRNVLIATSIGYNE.

ATP is bound by residues E30, K69, and 156–161; that span reads YLGKTS. Residues 431–451 form a disordered region; the sequence is DDFEHITNEDENGGDGNDGDG.

This sequence belongs to the Clp1 family. Clp1 subfamily. Component of a pre-mRNA cleavage factor complex. Interacts directly with PCF11.

The protein resides in the nucleus. Required for endonucleolytic cleavage during polyadenylation-dependent pre-mRNA 3'-end formation. In Lodderomyces elongisporus (strain ATCC 11503 / CBS 2605 / JCM 1781 / NBRC 1676 / NRRL YB-4239) (Yeast), this protein is mRNA cleavage and polyadenylation factor CLP1.